A 469-amino-acid chain; its full sequence is Glutamate--tRNA ligase (469 aa).

Positions 9–19 (PSPTGFLHVGG) match the 'HIGH' region motif. Residues Cys-98, Cys-100, Cys-125, and Asp-127 each coordinate Zn(2+). The 'KMSKS' region motif lies at 236-240 (KLSKR). An ATP-binding site is contributed by Lys-239.

This sequence belongs to the class-I aminoacyl-tRNA synthetase family. Glutamate--tRNA ligase type 1 subfamily. In terms of assembly, monomer. Zn(2+) serves as cofactor.

It localises to the cytoplasm. The catalysed reaction is tRNA(Glu) + L-glutamate + ATP = L-glutamyl-tRNA(Glu) + AMP + diphosphate. Functionally, catalyzes the attachment of glutamate to tRNA(Glu) in a two-step reaction: glutamate is first activated by ATP to form Glu-AMP and then transferred to the acceptor end of tRNA(Glu). This chain is Glutamate--tRNA ligase, found in Shewanella woodyi (strain ATCC 51908 / MS32).